We begin with the raw amino-acid sequence, 113 residues long: Cell wall protein PGA59 (113 aa).

The signal sequence occupies residues 1–18; it reads MQFSSAIILSAVAGSALA. Residues Asn22 and Asn80 are each glycosylated (N-linked (GlcNAc...) asparagine). Gly92 carries the GPI-anchor amidated glycine lipid modification. Residues 93–113 constitute a propeptide, removed in mature form; sequence AAAANAVPAVAAGLLALGAFM.

It belongs to the HWP1 family. N- and O-glycosylated. Post-translationally, the GPI-anchor is attached to the protein in the endoplasmic reticulum and serves to target the protein to the cell surface. There, the glucosamine-inositol phospholipid moiety is cleaved off and the GPI-modified mannoprotein is covalently attached via its lipidless GPI glycan remnant to the 1,6-beta-glucan of the outer cell wall layer.

It localises to the secreted. The protein localises to the cell wall. Its subcellular location is the membrane. Functionally, cell wall protein necessary for cell wall integrity. Plays only a minor role in hyphal morphogenesis and is not critical to biofilm formation. This Candida albicans (strain SC5314 / ATCC MYA-2876) (Yeast) protein is Cell wall protein PGA59 (PGA59).